Reading from the N-terminus, the 304-residue chain is Coenzyme PQQ synthesis protein B (304 aa).

Belongs to the PqqB family.

It participates in cofactor biosynthesis; pyrroloquinoline quinone biosynthesis. Functionally, may be involved in the transport of PQQ or its precursor to the periplasm. The chain is Coenzyme PQQ synthesis protein B from Pseudomonas aeruginosa (strain ATCC 15692 / DSM 22644 / CIP 104116 / JCM 14847 / LMG 12228 / 1C / PRS 101 / PAO1).